The primary structure comprises 338 residues: Ketol-acid reductoisomerase (NADP(+)) (338 aa).

One can recognise a KARI N-terminal Rossmann domain in the interval 1–181 (MKVFYDKDAD…GGGRAGIIET (181 aa)). NADP(+)-binding positions include 24–27 (YGSQ), R47, and S52. H107 is an active-site residue. Position 133 (G133) interacts with NADP(+). Residues 182–327 (NFREETETDL…AKLRSMMPWI (146 aa)) form the KARI C-terminal knotted domain. D190, E194, E226, and E230 together coordinate Mg(2+). S251 is a binding site for substrate.

Belongs to the ketol-acid reductoisomerase family. It depends on Mg(2+) as a cofactor.

It catalyses the reaction (2R)-2,3-dihydroxy-3-methylbutanoate + NADP(+) = (2S)-2-acetolactate + NADPH + H(+). The enzyme catalyses (2R,3R)-2,3-dihydroxy-3-methylpentanoate + NADP(+) = (S)-2-ethyl-2-hydroxy-3-oxobutanoate + NADPH + H(+). It participates in amino-acid biosynthesis; L-isoleucine biosynthesis; L-isoleucine from 2-oxobutanoate: step 2/4. The protein operates within amino-acid biosynthesis; L-valine biosynthesis; L-valine from pyruvate: step 2/4. Functionally, involved in the biosynthesis of branched-chain amino acids (BCAA). Catalyzes an alkyl-migration followed by a ketol-acid reduction of (S)-2-acetolactate (S2AL) to yield (R)-2,3-dihydroxy-isovalerate. In the isomerase reaction, S2AL is rearranged via a Mg-dependent methyl migration to produce 3-hydroxy-3-methyl-2-ketobutyrate (HMKB). In the reductase reaction, this 2-ketoacid undergoes a metal-dependent reduction by NADPH to yield (R)-2,3-dihydroxy-isovalerate. The polypeptide is Ketol-acid reductoisomerase (NADP(+)) (Paraburkholderia phytofirmans (strain DSM 17436 / LMG 22146 / PsJN) (Burkholderia phytofirmans)).